A 102-amino-acid polypeptide reads, in one-letter code: Small ribosomal subunit protein uS10 (102 aa).

This sequence belongs to the universal ribosomal protein uS10 family. Part of the 30S ribosomal subunit.

In terms of biological role, involved in the binding of tRNA to the ribosomes. The chain is Small ribosomal subunit protein uS10 from Rhodopseudomonas palustris (strain HaA2).